The chain runs to 584 residues: Protein BONZAI 3 (584 aa).

Positions 1 to 23 (MGGCLSGDVKGGKQAIGGVQQRP) are disordered. Glycine 2 carries the N-myristoyl glycine lipid modification. 2 consecutive C2 domains span residues 34–167 (HNDA…TLTL) and 178–305 (NRNL…NFVY). 5 residues coordinate Ca(2+): aspartate 67, aspartate 73, aspartate 126, aspartate 128, and aspartate 145. In terms of domain architecture, VWFA spans 344–563 (NFMVAVDFTA…SVVQALLEEL (220 aa)).

Belongs to the copine family. As to quaternary structure, interacts with BAP1 and BAP2. Ca(2+) is required as a cofactor. As to expression, expressed at an extremely low level.

The protein localises to the cell membrane. Its function is as follows. Negative regulator of cell death and defense responses. Repress a number of R genes and may have effects in promoting growth and development. May function in membrane trafficking and in fusion of vesicles with plasma membrane. This chain is Protein BONZAI 3 (BON3), found in Arabidopsis thaliana (Mouse-ear cress).